Consider the following 265-residue polypeptide: NADH dehydrogenase [ubiquinone] iron-sulfur protein 3, mitochondrial (265 aa).

The N-terminal 33 residues, 1–33 (MAALIRNLGARAAVAALSAKHVVPAAGSTALRM), are a transit peptide targeting the mitochondrion.

The protein belongs to the complex I 30 kDa subunit family. In terms of assembly, part of the mitochondrial membrane respiratory chain NADH dehydrogenase (Complex I). Interacts with sicily; interaction is stronger with unprocessed sicily protein.

It localises to the mitochondrion. It catalyses the reaction a ubiquinone + NADH + 5 H(+)(in) = a ubiquinol + NAD(+) + 4 H(+)(out). Functionally, core subunit of the mitochondrial membrane respiratory chain NADH dehydrogenase (Complex I) that is believed to belong to the minimal assembly required for catalysis. Complex I functions in the transfer of electrons from NADH to the respiratory chain. The immediate electron acceptor for the enzyme is believed to be ubiquinone. The protein is NADH dehydrogenase [ubiquinone] iron-sulfur protein 3, mitochondrial of Drosophila melanogaster (Fruit fly).